A 159-amino-acid polypeptide reads, in one-letter code: MPYSLEEQTYFMQEALKEAEKSLQKAEIPIGCVIVKDGEIIGRGHNAREESNQAIMHAEMMAINEANAHEGNWRLLDTTLFVTIEPCVMCSGAIGLARIPHVIYGASNQKFGGADSLYQILTDERLNHRVQVERGLLAADCANIMQTFFRQGRERKKNS.

The 128-residue stretch at 6–133 folds into the CMP/dCMP-type deaminase domain; it reads EEQTYFMQEA…ERLNHRVQVE (128 aa). A Zn(2+)-binding site is contributed by His57. Catalysis depends on Glu59, which acts as the Proton donor. Zn(2+) contacts are provided by Cys87 and Cys90.

Belongs to the cytidine and deoxycytidylate deaminase family. In terms of assembly, homodimer. It depends on Zn(2+) as a cofactor.

It catalyses the reaction adenosine(34) in tRNA + H2O + H(+) = inosine(34) in tRNA + NH4(+). Functionally, catalyzes the deamination of adenosine to inosine at the wobble position 34 of tRNA(Arg2). This Streptococcus pyogenes serotype M18 (strain MGAS8232) protein is tRNA-specific adenosine deaminase.